A 182-amino-acid polypeptide reads, in one-letter code: Transcription termination/antitermination protein NusG (182 aa).

One can recognise a KOW domain in the interval 131–163 (VGEQVRIKSGPFANQVGEVQEIEADKFKLTVLV).

This sequence belongs to the NusG family.

Functionally, participates in transcription elongation, termination and antitermination. This Staphylococcus carnosus (strain TM300) protein is Transcription termination/antitermination protein NusG.